The chain runs to 507 residues: tRNA (guanine(6)-N(2))-methyltransferase THUMP3 (507 aa).

The region spanning 165–285 is the THUMP domain; that stretch reads KIDQRNVKKE…DNEVIVGIAL (121 aa).

Belongs to the methyltransferase superfamily. In terms of assembly, part of the heterodimeric THUMPD3-TRM112 methyltransferase complex; this complex forms an active tRNA methyltransferase, where TRMT112 acts as an activator of the catalytic subunit THUMPD3.

It is found in the cytoplasm. The catalysed reaction is guanosine(6) in tRNA + S-adenosyl-L-methionine = N(2)-methylguanosine(6) in tRNA + S-adenosyl-L-homocysteine + H(+). It carries out the reaction guanosine(7) in tRNA + S-adenosyl-L-methionine = N(2)-methylguanosine(7) in tRNA + S-adenosyl-L-homocysteine + H(+). Catalytic subunit of the THUMPD3-TRM112 methyltransferase complex, that specifically mediates the S-adenosyl-L-methionine-dependent N(2)-methylation of guanosine nucleotide at position 6 (m2G6) in tRNAs. This is one of the major tRNA (guanine-N(2))-methyltransferases. Also catalyzes the S-adenosyl-L-methionine-dependent N(2)-methylation of guanosine nucleotide at position 7 of tRNA(Trp). The polypeptide is tRNA (guanine(6)-N(2))-methyltransferase THUMP3 (Homo sapiens (Human)).